Here is a 350-residue protein sequence, read N- to C-terminus: Putative transport protein YdbI (350 aa).

Helical transmembrane passes span 18-38, 67-87, 145-165, 207-227, 229-249, 257-277, 289-309, and 311-331; these read IFVVLTGVLYLFKSMINLILL, VVITFLYMLLAVLLTVGGFVF, ISTFGLQVVMALILSMFFLFE, FIIALVNCILTFIALWIMHFP, LFGLSIMVFFLGLIPVAGVVI, IAYSTGGGMYVLYIVLVIFAI, LMSAKTELPIFFTFTVLIFSE, and FFGIWGLIIGIPIFVFLLDIL.

The protein belongs to the autoinducer-2 exporter (AI-2E) (TC 2.A.86) family.

It is found in the cell membrane. The protein is Putative transport protein YdbI (ydbI) of Bacillus subtilis (strain 168).